Here is a 398-residue protein sequence, read N- to C-terminus: F-box/kelch-repeat protein At1g30090 (398 aa).

In terms of domain architecture, F-box spans 51 to 98 (EPLIPGLPDDVALNCLLRVPVQSHVSSKSVCKRWHLLFGTKETFFAKR). 5 Kelch repeats span residues 106–152 (PWLF…FRSV), 159–207 (TMFV…VIDG), 209–255 (IYAA…VLNG), 257–304 (LLVT…IYDR), and 305–346 (LFIV…AVNC).

This chain is F-box/kelch-repeat protein At1g30090, found in Arabidopsis thaliana (Mouse-ear cress).